A 312-amino-acid polypeptide reads, in one-letter code: Ribosomal protein L11 methyltransferase (312 aa).

The S-adenosyl-L-methionine site is built by T162, G183, D205, and N248.

The protein belongs to the methyltransferase superfamily. PrmA family.

Its subcellular location is the cytoplasm. It catalyses the reaction L-lysyl-[protein] + 3 S-adenosyl-L-methionine = N(6),N(6),N(6)-trimethyl-L-lysyl-[protein] + 3 S-adenosyl-L-homocysteine + 3 H(+). Its function is as follows. Methylates ribosomal protein L11. This is Ribosomal protein L11 methyltransferase from Anoxybacillus flavithermus (strain DSM 21510 / WK1).